The following is a 166-amino-acid chain: Regulator of ribonuclease activity A (166 aa).

This sequence belongs to the RraA family. In terms of assembly, homotrimer. Binds to both RNA-binding sites in the C-terminal region of Rne and to RhlB.

Its subcellular location is the cytoplasm. Globally modulates RNA abundance by binding to RNase E (Rne) and regulating its endonucleolytic activity. Can modulate Rne action in a substrate-dependent manner by altering the composition of the degradosome. Modulates RNA-binding and helicase activities of the degradosome. The chain is Regulator of ribonuclease activity A from Actinobacillus succinogenes (strain ATCC 55618 / DSM 22257 / CCUG 43843 / 130Z).